The primary structure comprises 148 residues: MYVENSYLSKQLCFLFYVSSKEIIKKYTNYLKEYDLTYTGYIVLMAIENDEKLNIKKLGERVFLDSGTLTPLLKKLEKKDYVVRTREEKDERNLQISLTEQGKAIKSPLAEISVKVFNEFNISEREASDIINNLRNFVSKNFDYSDKK.

An HTH marR-type domain is found at S9 to S139. A DNA-binding region (H-T-H motif) is located at residues I55–K78.

It belongs to the SarZ family.

The protein resides in the cytoplasm. Functionally, activates transcription of virulence factors alpha- and beta hemolysin genes (hla and hlb). Also, activates RNAIII expression, a central regulator transcribed from the agr locus. The chain is HTH-type transcriptional regulator SarZ (sarZ) from Staphylococcus aureus (strain USA300).